The primary structure comprises 96 residues: Small ribosomal subunit protein bS6 (96 aa).

It belongs to the bacterial ribosomal protein bS6 family.

Functionally, binds together with bS18 to 16S ribosomal RNA. In Streptococcus uberis (strain ATCC BAA-854 / 0140J), this protein is Small ribosomal subunit protein bS6.